The sequence spans 99 residues: Protein S100-Z (99 aa).

EF-hand domains are found at residues 13–48 (IRIF…FLSC) and 50–85 (KETQ…LTVA). 9 residues coordinate Ca(2+): serine 20, glutamate 23, lysine 28, glutamate 33, aspartate 63, asparagine 65, aspartate 67, glutamate 69, and glutamate 74.

It belongs to the S-100 family. In terms of assembly, homodimer. Interacts with S100P. Highest level of expression in spleen and leukocytes.

The polypeptide is Protein S100-Z (Homo sapiens (Human)).